A 213-amino-acid chain; its full sequence is Ribulose-phosphate 3-epimerase (213 aa).

Ser-9 is a binding site for substrate. Residues His-34, Asp-36, and His-66 each coordinate a divalent metal cation. The active-site Proton acceptor is the Asp-36. Residues His-66, 139–142, 166–168, and 186–187 contribute to the substrate site; these read GFGG, DGG, and GS. Asp-166 contributes to the a divalent metal cation binding site. Residue Asp-166 is the Proton donor of the active site.

It belongs to the ribulose-phosphate 3-epimerase family. Co(2+) serves as cofactor. It depends on Fe(2+) as a cofactor. Mn(2+) is required as a cofactor. The cofactor is Zn(2+).

It catalyses the reaction D-ribulose 5-phosphate = D-xylulose 5-phosphate. It participates in carbohydrate degradation; pentose phosphate pathway; D-xylulose 5-phosphate from D-ribulose 5-phosphate (non-oxidative stage): step 1/1. Catalyzes the reversible epimerization of D-ribulose 5-phosphate to D-xylulose 5-phosphate. This Encephalitozoon cuniculi (strain GB-M1) (Microsporidian parasite) protein is Ribulose-phosphate 3-epimerase (RPE1).